The sequence spans 453 residues: Bifunctional protein GlmU (453 aa).

Residues 1–225 (MNIVILAAGT…EWETLGVNSK (225 aa)) form a pyrophosphorylase region. UDP-N-acetyl-alpha-D-glucosamine is bound by residues 6–9 (LAAG), Lys20, Gln71, 76–77 (GT), 98–100 (YGD), Gly135, Glu150, Asn165, and Asn223. Asp100 provides a ligand contact to Mg(2+). Asn223 is a Mg(2+) binding site. A linker region spans residues 226-246 (AQLAELERIHQRNVADALLVD). Residues 247 to 453 (GVTLADPARV…GYVRPVKKKS (207 aa)) form an N-acetyltransferase region. UDP-N-acetyl-alpha-D-glucosamine is bound by residues Arg329 and Lys347. His359 acts as the Proton acceptor in catalysis. UDP-N-acetyl-alpha-D-glucosamine is bound by residues Tyr362 and Asn373. Acetyl-CoA-binding positions include Ala376, 382–383 (NY), Ser401, and Ala419.

It in the N-terminal section; belongs to the N-acetylglucosamine-1-phosphate uridyltransferase family. This sequence in the C-terminal section; belongs to the transferase hexapeptide repeat family. In terms of assembly, homotrimer. Requires Mg(2+) as cofactor.

Its subcellular location is the cytoplasm. The catalysed reaction is alpha-D-glucosamine 1-phosphate + acetyl-CoA = N-acetyl-alpha-D-glucosamine 1-phosphate + CoA + H(+). It catalyses the reaction N-acetyl-alpha-D-glucosamine 1-phosphate + UTP + H(+) = UDP-N-acetyl-alpha-D-glucosamine + diphosphate. It functions in the pathway nucleotide-sugar biosynthesis; UDP-N-acetyl-alpha-D-glucosamine biosynthesis; N-acetyl-alpha-D-glucosamine 1-phosphate from alpha-D-glucosamine 6-phosphate (route II): step 2/2. It participates in nucleotide-sugar biosynthesis; UDP-N-acetyl-alpha-D-glucosamine biosynthesis; UDP-N-acetyl-alpha-D-glucosamine from N-acetyl-alpha-D-glucosamine 1-phosphate: step 1/1. Its pathway is bacterial outer membrane biogenesis; LPS lipid A biosynthesis. Its function is as follows. Catalyzes the last two sequential reactions in the de novo biosynthetic pathway for UDP-N-acetylglucosamine (UDP-GlcNAc). The C-terminal domain catalyzes the transfer of acetyl group from acetyl coenzyme A to glucosamine-1-phosphate (GlcN-1-P) to produce N-acetylglucosamine-1-phosphate (GlcNAc-1-P), which is converted into UDP-GlcNAc by the transfer of uridine 5-monophosphate (from uridine 5-triphosphate), a reaction catalyzed by the N-terminal domain. The sequence is that of Bifunctional protein GlmU from Burkholderia ambifaria (strain ATCC BAA-244 / DSM 16087 / CCUG 44356 / LMG 19182 / AMMD) (Burkholderia cepacia (strain AMMD)).